The primary structure comprises 428 residues: Adenylosuccinate synthetase (428 aa).

Residues 12-18 (GDEGKGK) and 40-42 (GHT) contribute to the GTP site. Aspartate 13 acts as the Proton acceptor in catalysis. Mg(2+) is bound by residues aspartate 13 and glycine 40. Residues 13 to 16 (DEGK), 38 to 41 (NAGH), threonine 130, arginine 144, glutamine 225, threonine 240, and arginine 304 contribute to the IMP site. Histidine 41 serves as the catalytic Proton donor. Residue 300-306 (VTTGRAR) participates in substrate binding. GTP contacts are provided by residues arginine 306, 332–334 (KID), and 414–416 (SVG).

This sequence belongs to the adenylosuccinate synthetase family. As to quaternary structure, homodimer. Mg(2+) serves as cofactor.

It localises to the cytoplasm. It carries out the reaction IMP + L-aspartate + GTP = N(6)-(1,2-dicarboxyethyl)-AMP + GDP + phosphate + 2 H(+). It functions in the pathway purine metabolism; AMP biosynthesis via de novo pathway; AMP from IMP: step 1/2. In terms of biological role, plays an important role in the de novo pathway of purine nucleotide biosynthesis. Catalyzes the first committed step in the biosynthesis of AMP from IMP. In Clostridium botulinum (strain 657 / Type Ba4), this protein is Adenylosuccinate synthetase.